Here is a 507-residue protein sequence, read N- to C-terminus: ATP synthase subunit alpha, chloroplastic (507 aa).

170–177 (GDRQTGKT) serves as a coordination point for ATP.

The protein belongs to the ATPase alpha/beta chains family. In terms of assembly, F-type ATPases have 2 components, CF(1) - the catalytic core - and CF(0) - the membrane proton channel. CF(1) has five subunits: alpha(3), beta(3), gamma(1), delta(1), epsilon(1). CF(0) has four main subunits: a, b, b' and c.

The protein localises to the plastid. It localises to the chloroplast thylakoid membrane. It catalyses the reaction ATP + H2O + 4 H(+)(in) = ADP + phosphate + 5 H(+)(out). Produces ATP from ADP in the presence of a proton gradient across the membrane. The alpha chain is a regulatory subunit. This is ATP synthase subunit alpha, chloroplastic from Gossypium barbadense (Sea Island cotton).